We begin with the raw amino-acid sequence, 221 residues long: Factor arrest protein 7 (221 aa).

Component of a complex at least composed of FAR3, FAR7, FAR8, FAR10, FAR11 and VPS64.

In terms of biological role, participates in the control of the reentry into the cell cycle following pheromone treatment. The polypeptide is Factor arrest protein 7 (FAR7) (Saccharomyces cerevisiae (strain ATCC 204508 / S288c) (Baker's yeast)).